The sequence spans 344 residues: Putative [LysW]-lysine/[LysW]-ornithine hydrolase (344 aa).

H66 provides a ligand contact to Zn(2+). The active site involves D68. Position 90 (D90) interacts with Zn(2+). Catalysis depends on E117, which acts as the Proton acceptor. Residues E118, E139, and H297 each coordinate Zn(2+).

Belongs to the peptidase M20A family. LysK subfamily. It depends on Zn(2+) as a cofactor. Co(2+) is required as a cofactor.

The protein resides in the cytoplasm. The enzyme catalyses [amino-group carrier protein]-C-terminal-gamma-(L-lysyl)-L-glutamate + H2O = [amino-group carrier protein]-C-terminal-L-glutamate + L-lysine. It carries out the reaction [amino-group carrier protein]-C-terminal-gamma-(L-ornithyl)-L-glutamate + H2O = [amino-group carrier protein]-C-terminal-L-glutamate + L-ornithine. It participates in amino-acid biosynthesis; L-lysine biosynthesis via AAA pathway; L-lysine from L-alpha-aminoadipate (Thermus route): step 5/5. The protein operates within amino-acid biosynthesis; L-arginine biosynthesis. Functionally, catalyzes the release of L-lysine from [LysW]-gamma-L-lysine and the release of L-ornithine from [LysW]-L-ornithine. This Thermococcus kodakarensis (strain ATCC BAA-918 / JCM 12380 / KOD1) (Pyrococcus kodakaraensis (strain KOD1)) protein is Putative [LysW]-lysine/[LysW]-ornithine hydrolase.